The sequence spans 729 residues: Fatty acid oxidation complex subunit alpha (729 aa).

Residues 1 to 189 form an enoyl-CoA hydratase/isomerase region; that stretch reads MLYKGDTLYL…KIGLVDGVVK (189 aa). Residue aspartate 296 participates in substrate binding. Residues 311–729 are 3-hydroxyacyl-CoA dehydrogenase; that stretch reads ETPKQAAVLG…ARPVGSLKTA (419 aa). Residues methionine 324, aspartate 343, 400 to 402, lysine 407, and serine 429 contribute to the NAD(+) site; that span reads VVE. Histidine 450 acts as the For 3-hydroxyacyl-CoA dehydrogenase activity in catalysis. An NAD(+)-binding site is contributed by asparagine 453. Substrate-binding residues include asparagine 500 and tyrosine 660. The segment at 708 to 729 is disordered; it reads RHNEPYYPPVEPARPVGSLKTA.

The protein in the N-terminal section; belongs to the enoyl-CoA hydratase/isomerase family. It in the C-terminal section; belongs to the 3-hydroxyacyl-CoA dehydrogenase family. As to quaternary structure, heterotetramer of two alpha chains (FadB) and two beta chains (FadA).

It carries out the reaction a (3S)-3-hydroxyacyl-CoA + NAD(+) = a 3-oxoacyl-CoA + NADH + H(+). It catalyses the reaction a (3S)-3-hydroxyacyl-CoA = a (2E)-enoyl-CoA + H2O. The catalysed reaction is a 4-saturated-(3S)-3-hydroxyacyl-CoA = a (3E)-enoyl-CoA + H2O. The enzyme catalyses (3S)-3-hydroxybutanoyl-CoA = (3R)-3-hydroxybutanoyl-CoA. It carries out the reaction a (3Z)-enoyl-CoA = a 4-saturated (2E)-enoyl-CoA. It catalyses the reaction a (3E)-enoyl-CoA = a 4-saturated (2E)-enoyl-CoA. Its pathway is lipid metabolism; fatty acid beta-oxidation. Its function is as follows. Involved in the aerobic and anaerobic degradation of long-chain fatty acids via beta-oxidation cycle. Catalyzes the formation of 3-oxoacyl-CoA from enoyl-CoA via L-3-hydroxyacyl-CoA. It can also use D-3-hydroxyacyl-CoA and cis-3-enoyl-CoA as substrate. This is Fatty acid oxidation complex subunit alpha from Salmonella typhimurium (strain LT2 / SGSC1412 / ATCC 700720).